Reading from the N-terminus, the 74-residue chain is Turripeptide OL135 (74 aa).

The signal sequence occupies residues 1-20; it reads MKVPIVLMLVLLLIMPLSDG. The propeptide occupies 21–28; sequence YERKRXXX.

The protein belongs to the conopeptide P-like superfamily. Contains 3 disulfide bonds. As to expression, expressed by the venom duct.

Its subcellular location is the secreted. Its function is as follows. Acts as a neurotoxin by inhibiting an ion channel. This Iotyrris olangoensis (Sea snail) protein is Turripeptide OL135.